Reading from the N-terminus, the 318-residue chain is NAC domain-containing protein 59 (318 aa).

Residues 24–174 enclose the NAC domain; sequence LPPGFRFHPT…ECVISRVFHT (151 aa). A DNA-binding region spans residues 121 to 180; that stretch reads VGMKKTLVFYKGRAPKGVKTNWVMHEYRLEGKFAIDNLSKTAKNECVISRVFHTRTDGTK.

As to expression, mostly expressed in root cortex, phloem, atrichoblast and quiescent center (QC), and, to a lower extent, in root endodermis, xylem, pericycle, columella and lateral root cap (LRC). Expressed in roots, cotyledons, very young leaves, senescing leaves, mature flowers and pollen.

The protein localises to the nucleus. Functionally, transcription activator that binds to DNA in promoters of target genes on a specific bipartite motif 5'-[AG]CGT[AG](4-5n)[AG][CT]ACGCAA-3'. Triggers the expression of senescence-associated genes during age-, salt- and dark-induced senescence through a regulatory network that may involve cross-talk with salt- and H(2)O(2)-dependent signaling pathways. The sequence is that of NAC domain-containing protein 59 from Arabidopsis thaliana (Mouse-ear cress).